The chain runs to 369 residues: Tsukushi (369 aa).

Positions 1 to 19 (MQFLAWFNMLLLLPCFSTT) are cleaved as a signal peptide. One can recognise an LRRNT domain in the interval 20–60 (KTCFPGCHCEVESFGLFDSFSLTKVDCSGIGSHIVPVPIPL). LRR repeat units lie at residues 61 to 81 (DTSY…SMLT), 87 to 108 (TLVS…TFSR), 111 to 132 (YLES…CFSS), 134 to 155 (PLGD…VFAS), 161 to 181 (PLNV…HEKS), 184 to 205 (NIQN…QGIP), 206 to 226 (LRYL…DFKG), 229 to 248 (GLIH…SPYS), 254 to 276 (ALQV…VIFG), 279 to 300 (SIQE…VLKY), and 303 to 323 (SLKS…KEGQ). An N-linked (GlcNAc...) asparagine glycan is attached at asparagine 76. N-linked (GlcNAc...) asparagine glycosylation is present at asparagine 189. N-linked (GlcNAc...) asparagine glycosylation occurs at asparagine 284.

As to quaternary structure, forms a ternary complex with chordin/CHRD and BMP4. Interacts with FZD4 (via FZ domain); competes with WNT2B for binding to FZD4, inhibiting Wnt signaling and repressing peripheral eye development. Interacts with BMP4; shows stronger interaction with BMP4 than isoform 2. Interacts with DVR1/VG1; the interaction is inhibited by BMP4. Interacts with BMP7. In terms of assembly, interacts with FZD4 (via FZ domain); competes with WNT2B for binding to FZD4, inhibiting Wnt signaling and repressing peripheral eye development. Interacts with BMP4; shows weaker interaction with BMP4 than isoform 1. Interacts with DVR1/VG1; the interaction is inhibited by BMP4. Interacts with BMP7. N-glycosylated. During embryonic development, expressed in the middle primitive streak and Hensen's node. Expressed in the peripheral region of the developing eye. Expressed in the presomitic mesoderm during somitogenesis in a NOTCH-dependent manner.

Its subcellular location is the secreted. Its function is as follows. Contributes to various developmental events through its interactions with multiple signaling pathways. Dorsalizing factor involved in the induction of Hensen's node by inhibiting bone morphogenetic proteins during gastrulation and by enhancing DVR1/VG1 activity. Wnt signaling inhibitor which competes with WNT2B for binding to Wnt receptor FZD4 and represses WNT2B-dependent development of the peripheral eye. Functionally, shows strong bone morphogenetic protein antagonistic activity. Shows weak bone morphogenetic protein antagonistic activity. In Gallus gallus (Chicken), this protein is Tsukushi (TSKU).